The following is a 159-amino-acid chain: Transcription repressor OFP6 (159 aa).

Residues 39 to 60 (PKRPSSTYRHCHSSISSATPSS) are disordered. Residues 51–60 (SSISSATPSS) are compositionally biased toward low complexity. The 60-residue stretch at 70-129 (VEKDSDDPYLDFRQSMLQMILENQIYSKDELRELLQCFLSLNSHYHHGIIVRAFSEIWED) folds into the OVATE domain.

In terms of assembly, interacts with KNAT1 and KNAT7. Expressed in roots, shoots, rosette and cauline leaves, stems, flower buds and siliques.

Its subcellular location is the nucleus. In terms of biological role, transcriptional repressor that regulates multiple aspects of plant growth and development through the regulation of BEL1-LIKE (BLH) and KNOX TALE (KNAT) homeodomain transcription factors. This Arabidopsis thaliana (Mouse-ear cress) protein is Transcription repressor OFP6 (OFP6).